The sequence spans 161 residues: Allophycocyanin alpha chain (161 aa).

Position 71 is an N4-methylasparagine (N71). C81 contacts (2R,3E)-phycocyanobilin.

This sequence belongs to the phycobiliprotein family. As to quaternary structure, heterodimer of an alpha and a beta chain. Contains one covalently linked phycocyanobilin chromophore.

It localises to the cellular thylakoid membrane. Functionally, light-harvesting photosynthetic bile pigment-protein from the phycobiliprotein complex. Allophycocyanin has a maximum absorption at approximately 650 nanometers. The polypeptide is Allophycocyanin alpha chain (apcA) (Synechocystis sp. (strain ATCC 27184 / PCC 6803 / Kazusa)).